The chain runs to 361 residues: Ribosomal RNA large subunit methyltransferase M (361 aa).

S-adenosyl-L-methionine is bound by residues serine 187, 220 to 223 (CPGG), aspartate 239, aspartate 259, and aspartate 276. The Proton acceptor role is filled by lysine 305.

This sequence belongs to the class I-like SAM-binding methyltransferase superfamily. RNA methyltransferase RlmE family. RlmM subfamily. In terms of assembly, monomer.

It is found in the cytoplasm. The catalysed reaction is cytidine(2498) in 23S rRNA + S-adenosyl-L-methionine = 2'-O-methylcytidine(2498) in 23S rRNA + S-adenosyl-L-homocysteine + H(+). Its function is as follows. Catalyzes the 2'-O-methylation at nucleotide C2498 in 23S rRNA. The sequence is that of Ribosomal RNA large subunit methyltransferase M from Shewanella sp. (strain ANA-3).